The following is a 221-amino-acid chain: uncharacterized protein (221 aa).

Helical transmembrane passes span 2 to 22, 34 to 54, 97 to 117, 131 to 151, and 177 to 197; these read FIAKSIVIGLLICVLFFFFFV, LLTLGLLNASLTALSDLLAQA, AYGLCLTPIQFRWFVALSNVI, ALDQFIFAPLGIVFFFLFMGI, and ILWPAVQLFNFTFVPLVLQVI.

It belongs to the peroxisomal membrane protein PXMP2/4 family.

It localises to the membrane. This is an uncharacterized protein from Schizosaccharomyces pombe (strain 972 / ATCC 24843) (Fission yeast).